A 100-amino-acid chain; its full sequence is UPF0248 protein APE_0939 (100 aa).

This sequence belongs to the UPF0248 family.

This is UPF0248 protein APE_0939 from Aeropyrum pernix (strain ATCC 700893 / DSM 11879 / JCM 9820 / NBRC 100138 / K1).